We begin with the raw amino-acid sequence, 105 residues long: uncharacterized protein (105 aa).

The tract at residues 81 to 105 (NNNNKTITVDNNNNNNNNNNNNNNK) is disordered.

This is an uncharacterized protein from Dictyostelium discoideum (Social amoeba).